The sequence spans 298 residues: Probable GTP 3',8-cyclase (298 aa).

Residues 4–230 form the Radical SAM core domain; the sequence is KFGREIRSLR…RKKYIVDGLE (227 aa). Arginine 13 is a GTP binding site. Residues cysteine 20 and cysteine 24 each coordinate [4Fe-4S] cluster. Tyrosine 26 is a binding site for S-adenosyl-L-methionine. Position 27 (cysteine 27) interacts with [4Fe-4S] cluster. Lysine 61 contributes to the GTP binding site. An S-adenosyl-L-methionine-binding site is contributed by glycine 65. Residue threonine 91 coordinates GTP. An S-adenosyl-L-methionine-binding site is contributed by serine 115. Lysine 152 provides a ligand contact to GTP. [4Fe-4S] cluster-binding residues include cysteine 243 and cysteine 246. 248–250 lines the GTP pocket; it reads RIR. A [4Fe-4S] cluster-binding site is contributed by cysteine 260.

The protein belongs to the radical SAM superfamily. MoaA family. [4Fe-4S] cluster is required as a cofactor.

The enzyme catalyses GTP + AH2 + S-adenosyl-L-methionine = (8S)-3',8-cyclo-7,8-dihydroguanosine 5'-triphosphate + 5'-deoxyadenosine + L-methionine + A + H(+). It participates in cofactor biosynthesis; molybdopterin biosynthesis. Its function is as follows. Catalyzes the cyclization of GTP to (8S)-3',8-cyclo-7,8-dihydroguanosine 5'-triphosphate. The sequence is that of Probable GTP 3',8-cyclase from Methanocaldococcus jannaschii (strain ATCC 43067 / DSM 2661 / JAL-1 / JCM 10045 / NBRC 100440) (Methanococcus jannaschii).